The following is a 154-amino-acid chain: Ribonuclease K6 (154 aa).

The signal sequence occupies residues 1–27; it reads MGPHLLGRSSLLLLLLGMWWSVRPLCA. Histidine 42 acts as the Proton acceptor in catalysis. Cystine bridges form between cysteine 50–cysteine 108, cysteine 64–cysteine 118, cysteine 82–cysteine 133, and cysteine 89–cysteine 96. Asparagine 59 carries N-linked (GlcNAc...) asparagine glycosylation. Substrate-binding positions include 65–69 and lysine 90; that span reads KPENT. Residue asparagine 104 is glycosylated (N-linked (GlcNAc...) asparagine). Histidine 149 serves as the catalytic Proton donor.

The protein belongs to the pancreatic ribonuclease family. In terms of assembly, interacts (via N-terminus) with bacterial lipopolysaccharide (LPS). In terms of tissue distribution, kidney (at protein level).

The protein localises to the secreted. The protein resides in the lysosome. It is found in the cytoplasmic granule. Ribonuclease which shows a preference for the pyrimidines uridine and cytosine. Has potent antimicrobial activity against a range of Gram-positive and Gram-negative bacteria, including P.aeruginosa, A.baumanii, M.luteus, S.aureus, E.faecalis, E.faecium, S.saprophyticus and E.coli. Causes loss of bacterial membrane integrity, and also promotes agglutination of Gram-negative bacteria. Probably contributes to urinary tract sterility. Bactericidal activity is independent of RNase activity. The protein is Ribonuclease K6 (RNASE6) of Bos taurus (Bovine).